Here is a 238-residue protein sequence, read N- to C-terminus: uncharacterized protein (238 aa).

7 helical membrane passes run 22 to 42, 49 to 69, 78 to 98, 105 to 125, 141 to 161, 166 to 186, and 208 to 228; these read VYGWMTAGLAVTALTSLGLYA, LFSLWWVWCFATLGVSFYIQA, AVMGLFLAYSVLEGMFFGTMV, FGGGIVWAAFGSAAVIFGLSA, ILMLALIGLMVISLGFLVVSL, PLMYLLICYLGLIIFVGLTVV, and LSLIMALQMYCNVIMIFWYLL.

The protein belongs to the BI1 family.

It is found in the cell membrane. This is an uncharacterized protein from Chlamydia muridarum (strain MoPn / Nigg).